Consider the following 310-residue polypeptide: GTPase Era (310 aa).

Residues 17–184 (HSGFVALIGA…LDYLAQALPA (168 aa)) form the Era-type G domain. Residues 25–32 (GAPNAGKS) form a G1 region. 25–32 (GAPNAGKS) lines the GTP pocket. Residues 51–55 (QTTRA) form a G2 region. The tract at residues 72-75 (DTPG) is G3. GTP-binding positions include 72-76 (DTPGI) and 134-137 (NKVD). The G4 stretch occupies residues 134-137 (NKVD). The interval 163 to 165 (VSA) is G5. The region spanning 215-292 (LHQELPYSSH…HLFLFVKVRE (78 aa)) is the KH type-2 domain.

This sequence belongs to the TRAFAC class TrmE-Era-EngA-EngB-Septin-like GTPase superfamily. Era GTPase family. Monomer.

It localises to the cytoplasm. It is found in the cell inner membrane. An essential GTPase that binds both GDP and GTP, with rapid nucleotide exchange. Plays a role in 16S rRNA processing and 30S ribosomal subunit biogenesis and possibly also in cell cycle regulation and energy metabolism. The protein is GTPase Era of Mesorhizobium japonicum (strain LMG 29417 / CECT 9101 / MAFF 303099) (Mesorhizobium loti (strain MAFF 303099)).